Consider the following 279-residue polypeptide: Pantothenate synthetase (279 aa).

An ATP-binding site is contributed by 31-38 (MGALHEGH). The active-site Proton donor is the His-38. Gln-62 contacts (R)-pantoate. A beta-alanine-binding site is contributed by Gln-62. Residue 148–151 (GEKD) coordinates ATP. Gln-154 is a binding site for (R)-pantoate. Residues Val-177 and 185–188 (LSSR) each bind ATP.

It belongs to the pantothenate synthetase family. As to quaternary structure, homodimer.

The protein resides in the cytoplasm. The enzyme catalyses (R)-pantoate + beta-alanine + ATP = (R)-pantothenate + AMP + diphosphate + H(+). The protein operates within cofactor biosynthesis; (R)-pantothenate biosynthesis; (R)-pantothenate from (R)-pantoate and beta-alanine: step 1/1. In terms of biological role, catalyzes the condensation of pantoate with beta-alanine in an ATP-dependent reaction via a pantoyl-adenylate intermediate. The protein is Pantothenate synthetase of Cereibacter sphaeroides (strain ATCC 17029 / ATH 2.4.9) (Rhodobacter sphaeroides).